We begin with the raw amino-acid sequence, 226 residues long: 7-cyano-7-deazaguanine synthase (226 aa).

9 to 19 (LSGGLDSATVL) is a binding site for ATP. 4 residues coordinate Zn(2+): Cys-189, Cys-199, Cys-202, and Cys-205.

The protein belongs to the QueC family. Requires Zn(2+) as cofactor.

The enzyme catalyses 7-carboxy-7-deazaguanine + NH4(+) + ATP = 7-cyano-7-deazaguanine + ADP + phosphate + H2O + H(+). It functions in the pathway purine metabolism; 7-cyano-7-deazaguanine biosynthesis. Its function is as follows. Catalyzes the ATP-dependent conversion of 7-carboxy-7-deazaguanine (CDG) to 7-cyano-7-deazaguanine (preQ(0)). The protein is 7-cyano-7-deazaguanine synthase of Cupriavidus pinatubonensis (strain JMP 134 / LMG 1197) (Cupriavidus necator (strain JMP 134)).